Here is a 388-residue protein sequence, read N- to C-terminus: tRNA (guanine(26)-N(2))-dimethyltransferase (388 aa).

The Trm1 methyltransferase domain maps to 7–381 (KTVEEGLTKI…APLKKIKEII (375 aa)). Residues arginine 40, arginine 70, aspartate 88, aspartate 115, and alanine 116 each coordinate S-adenosyl-L-methionine. Positions 248, 251, 268, and 271 each coordinate Zn(2+).

This sequence belongs to the class I-like SAM-binding methyltransferase superfamily. Trm1 family.

It catalyses the reaction guanosine(26) in tRNA + 2 S-adenosyl-L-methionine = N(2)-dimethylguanosine(26) in tRNA + 2 S-adenosyl-L-homocysteine + 2 H(+). Dimethylates a single guanine residue at position 26 of a number of tRNAs using S-adenosyl-L-methionine as donor of the methyl groups. In Methanobrevibacter smithii (strain ATCC 35061 / DSM 861 / OCM 144 / PS), this protein is tRNA (guanine(26)-N(2))-dimethyltransferase.